A 236-amino-acid polypeptide reads, in one-letter code: Phosphoribosylaminoimidazole-succinocarboxamide synthase (236 aa).

Belongs to the SAICAR synthetase family.

It carries out the reaction 5-amino-1-(5-phospho-D-ribosyl)imidazole-4-carboxylate + L-aspartate + ATP = (2S)-2-[5-amino-1-(5-phospho-beta-D-ribosyl)imidazole-4-carboxamido]succinate + ADP + phosphate + 2 H(+). The protein operates within purine metabolism; IMP biosynthesis via de novo pathway; 5-amino-1-(5-phospho-D-ribosyl)imidazole-4-carboxamide from 5-amino-1-(5-phospho-D-ribosyl)imidazole-4-carboxylate: step 1/2. This Pseudomonas syringae pv. syringae (strain B728a) protein is Phosphoribosylaminoimidazole-succinocarboxamide synthase.